Here is a 932-residue protein sequence, read N- to C-terminus: DNA mismatch repair protein MutS (932 aa).

615 to 622 (GPNMAGKS) provides a ligand contact to ATP.

It belongs to the DNA mismatch repair MutS family.

This protein is involved in the repair of mismatches in DNA. It is possible that it carries out the mismatch recognition step. This protein has a weak ATPase activity. This Clostridium botulinum (strain Okra / Type B1) protein is DNA mismatch repair protein MutS.